The following is a 237-amino-acid chain: Cytosolic-abundant heat soluble protein 86272 (237 aa).

A disordered region spans residues 96–125 (FKDQEKYSREQAAIARAHDKDLEKKTEEYR). Residues 111–125 (RAHDKDLEKKTEEYR) are compositionally biased toward basic and acidic residues. Residues 115 to 193 (KDLEKKTEEY…MNALEQSKMA (79 aa)) are a coiled coil. CAHS motif stretches follow at residues 124-142 (YRKT…LEKQ) and 161-179 (QKRE…LEHE). Over residues 204–215 (AGTTVSGGTTVS) the composition is skewed to low complexity. A disordered region spans residues 204–237 (AGTTVSGGTTVSEHTEVHDGKEKKSLGEKIKSLF). The segment covering 216-237 (EHTEVHDGKEKKSLGEKIKSLF) has biased composition (basic and acidic residues).

The protein belongs to the Cytosolic-abundant heat soluble protein (CAHS) family.

It localises to the cytoplasm. Its function is as follows. CAHS proteins are cytosolic heat soluble proteins that seem to contribute to the anhydrobiosis in tardigrades, but their specific mechanisms are yet to be identified. It is possible that protection during anhydrobiosis might occur via the stabilization of vitrifying small molecules such as sugars, but not via the direct glass transition of CAHS proteins themselves. In Hypsibius exemplaris (Freshwater tardigrade), this protein is Cytosolic-abundant heat soluble protein 86272.